Consider the following 504-residue polypeptide: O-fucosyltransferase 39 (504 aa).

Residues 11-27 (WILSMFFFVVLFCNNVS) traverse the membrane as a helical; Signal-anchor for type II membrane protein segment. An N-linked (GlcNAc...) asparagine glycan is attached at Asn115. Residue 288 to 290 (HLR) coordinates substrate. N-linked (GlcNAc...) asparagine glycans are attached at residues Asn359 and Asn460.

Belongs to the glycosyltransferase GT106 family.

The protein resides in the membrane. It functions in the pathway glycan metabolism. The polypeptide is O-fucosyltransferase 39 (Arabidopsis thaliana (Mouse-ear cress)).